The primary structure comprises 293 residues: Protease HtpX homolog (293 aa).

Transmembrane regions (helical) follow at residues 4 to 24 (IFLFVATNIAVIAVMSIVLSL) and 39 to 59 (PMLLVFSLVVGFTGAIISLLI). H144 is a Zn(2+) binding site. E145 is a catalytic residue. H148 contacts Zn(2+). The next 2 membrane-spanning stretches (helical) occupy residues 159–179 (LVQGVVNTFVVFLARVVGYFV) and 200–220 (ITVLVCQVVFGIAASVIVAWF). E225 is a Zn(2+) binding site.

The protein belongs to the peptidase M48B family. Requires Zn(2+) as cofactor.

The protein resides in the cell inner membrane. The polypeptide is Protease HtpX homolog (Herminiimonas arsenicoxydans).